The chain runs to 241 residues: Homeobox protein TGIF2LX (241 aa).

2 disordered regions span residues 1-58 and 125-207; these read MEAA…GNLP and KTGK…ELVS. Polar residues predominate over residues 10–39; sequence ETQSPVQKDSPAKTQSPAQDTSIMSRNNAD. The homeobox; TALE-type DNA-binding region spans 48 to 111; sequence EHKKKRKGNL…INARRRILPD (64 aa).

The protein belongs to the TALE/TGIF homeobox family.

The protein resides in the nucleus. Functionally, may have a transcription role in testis. The sequence is that of Homeobox protein TGIF2LX (TGIF2LX) from Pan troglodytes (Chimpanzee).